The following is a 228-amino-acid chain: Glutamate transport system permease protein GluC (228 aa).

Transmembrane regions (helical) follow at residues 16-36 (FWVT…LGTI), 64-84 (LTLV…LTLA), 100-120 (AVLG…RSGI), and 195-215 (LFVV…PMGL). Residues 16–217 (FWVTIQLTVY…ILTLPMGLGL (202 aa)) enclose the ABC transmembrane type-1 domain.

The protein belongs to the binding-protein-dependent transport system permease family. HisMQ subfamily. In terms of assembly, the complex is composed of two ATP-binding proteins (GluA), two transmembrane proteins (GluC and GluD) and a solute-binding protein (GluB).

The protein localises to the cell membrane. Its function is as follows. Part of the ABC transporter complex GluABCD involved in glutamate uptake. Probably responsible for the translocation of the substrate across the membrane. This chain is Glutamate transport system permease protein GluC, found in Corynebacterium efficiens (strain DSM 44549 / YS-314 / AJ 12310 / JCM 11189 / NBRC 100395).